Reading from the N-terminus, the 939-residue chain is Aconitate hydratase A (939 aa).

The interval 433-453 (GSGESLATGAEGRPSKPVTVA) is disordered. [4Fe-4S] cluster-binding residues include C475, C541, and C544.

Belongs to the aconitase/IPM isomerase family. As to quaternary structure, monomer. It depends on [4Fe-4S] cluster as a cofactor.

The enzyme catalyses citrate = D-threo-isocitrate. It carries out the reaction (2S,3R)-3-hydroxybutane-1,2,3-tricarboxylate = 2-methyl-cis-aconitate + H2O. It participates in carbohydrate metabolism; tricarboxylic acid cycle; isocitrate from oxaloacetate: step 2/2. It functions in the pathway organic acid metabolism; propanoate degradation. Functionally, involved in the catabolism of short chain fatty acids (SCFA) via the tricarboxylic acid (TCA)(acetyl degradation route) and probably via the 2-methylcitrate cycle I (propionate degradation route). Catalyzes the reversible isomerization of citrate to isocitrate via cis-aconitate. Could catalyze the hydration of 2-methyl-cis-aconitate to yield (2R,3S)-2-methylisocitrate. The apo form of AcnA functions as a RNA-binding regulatory protein. This Corynebacterium glutamicum (strain ATCC 13032 / DSM 20300 / JCM 1318 / BCRC 11384 / CCUG 27702 / LMG 3730 / NBRC 12168 / NCIMB 10025 / NRRL B-2784 / 534) protein is Aconitate hydratase A (acn).